Consider the following 105-residue polypeptide: SAGA-associated factor 11 (105 aa).

Residues 76–97 (FRCPNCSRDLSANRFAAHLERC) form an SGF11-type zinc finger.

This sequence belongs to the SGF11 family. As to quaternary structure, component of the 1.8 MDa SAGA transcription coactivator-HAT complex. SAGA is built of 5 distinct domains with specialized functions. Within the SAGA complex, SUS1, SGF11, SGF73 and UBP8 form an additional subcomplex of SAGA called the DUB module (deubiquitination module). Interacts directly with SGF73, SUS1 and UBP8.

The protein resides in the nucleus. Functionally, functions as a component of the transcription regulatory histone acetylation (HAT) complex SAGA. At the promoters, SAGA is required for recruitment of the basal transcription machinery. It influences RNA polymerase II transcriptional activity through different activities such as TBP interaction and promoter selectivity, interaction with transcription activators, and chromatin modification through histone acetylation and deubiquitination. SAGA acetylates nucleosomal histone H3 to some extent (to form H3K9ac, H3K14ac, H3K18ac and H3K23ac). SAGA interacts with DNA via upstream activating sequences (UASs). Involved in transcriptional regulation of a subset of SAGA-regulated genes. Within the SAGA complex, participates in a subcomplex, that specifically deubiquitinates histones H2B. The chain is SAGA-associated factor 11 from Eremothecium gossypii (strain ATCC 10895 / CBS 109.51 / FGSC 9923 / NRRL Y-1056) (Yeast).